A 226-amino-acid chain; its full sequence is Ribose-5-phosphate isomerase A (226 aa).

Residues 28 to 31 (TGST), 80 to 83 (DGAD), and 93 to 96 (KGGG) contribute to the substrate site. E102 functions as the Proton acceptor in the catalytic mechanism. K120 contacts substrate.

This sequence belongs to the ribose 5-phosphate isomerase family. Homodimer.

The catalysed reaction is aldehydo-D-ribose 5-phosphate = D-ribulose 5-phosphate. It participates in carbohydrate degradation; pentose phosphate pathway; D-ribose 5-phosphate from D-ribulose 5-phosphate (non-oxidative stage): step 1/1. Catalyzes the reversible conversion of ribose-5-phosphate to ribulose 5-phosphate. The sequence is that of Ribose-5-phosphate isomerase A from Caulobacter sp. (strain K31).